Reading from the N-terminus, the 73-residue chain is Translation initiation factor IF-1 (73 aa).

One can recognise an S1-like domain in the interval 1 to 73 (MAKKEDTLVL…TKARVVYRHR (73 aa)).

Belongs to the IF-1 family. As to quaternary structure, component of the 30S ribosomal translation pre-initiation complex which assembles on the 30S ribosome in the order IF-2 and IF-3, IF-1 and N-formylmethionyl-tRNA(fMet); mRNA recruitment can occur at any time during PIC assembly.

It is found in the cytoplasm. One of the essential components for the initiation of protein synthesis. Stabilizes the binding of IF-2 and IF-3 on the 30S subunit to which N-formylmethionyl-tRNA(fMet) subsequently binds. Helps modulate mRNA selection, yielding the 30S pre-initiation complex (PIC). Upon addition of the 50S ribosomal subunit IF-1, IF-2 and IF-3 are released leaving the mature 70S translation initiation complex. In Chlamydia pneumoniae (Chlamydophila pneumoniae), this protein is Translation initiation factor IF-1.